The chain runs to 179 residues: Large ribosomal subunit protein uL10 (179 aa).

This sequence belongs to the universal ribosomal protein uL10 family. As to quaternary structure, part of the ribosomal stalk of the 50S ribosomal subunit. The N-terminus interacts with L11 and the large rRNA to form the base of the stalk. The C-terminus forms an elongated spine to which L12 dimers bind in a sequential fashion forming a multimeric L10(L12)X complex.

Forms part of the ribosomal stalk, playing a central role in the interaction of the ribosome with GTP-bound translation factors. The sequence is that of Large ribosomal subunit protein uL10 from Symbiobacterium thermophilum (strain DSM 24528 / JCM 14929 / IAM 14863 / T).